A 448-amino-acid polypeptide reads, in one-letter code: tRNA wybutosine-synthesizing protein 2 homolog (448 aa).

S-adenosyl-L-methionine contacts are provided by residues Ser-218, Lys-225, Glu-265, and 293-294 (DN).

It belongs to the class I-like SAM-binding methyltransferase superfamily. TRM5/TYW2 family.

It carries out the reaction 4-demethylwyosine(37) in tRNA(Phe) + S-adenosyl-L-methionine = 4-demethyl-7-[(3S)-3-amino-3-carboxypropyl]wyosine(37) in tRNA(Phe) + S-methyl-5'-thioadenosine + H(+). Its pathway is tRNA modification; wybutosine-tRNA(Phe) biosynthesis. S-adenosyl-L-methionine-dependent transferase that acts as a component of the wybutosine biosynthesis pathway. Wybutosine is a hyper modified guanosine with a tricyclic base found at the 3'-position adjacent to the anticodon of eukaryotic phenylalanine tRNA. Catalyzes the transfer of the alpha-amino-alpha-carboxypropyl (acp) group from S-adenosyl-L-methionine to the C-7 position of 4-demethylwyosine (imG-14) to produce wybutosine-86. The protein is tRNA wybutosine-synthesizing protein 2 homolog (TRMT12) of Homo sapiens (Human).